The following is a 301-amino-acid chain: ATP synthase F(0) complex subunit B1, mitochondrial (301 aa).

The transit peptide at 1–21 (MSLSRLSSPQTFSRVFIVARG) directs the protein to the mitochondrion.

The protein belongs to the eukaryotic ATPase B chain family. As to quaternary structure, subunit of the F-type ATPase which has 2 components, CF(1) - the catalytic core - and CF(0) - the membrane proton channel.

The protein resides in the mitochondrion. The protein localises to the mitochondrion inner membrane. Functionally, mitochondrial membrane ATP synthase (F(1)F(0) ATP synthase or Complex V) produces ATP from ADP in the presence of a proton gradient across the membrane which is generated by electron transport complexes of the respiratory chain. F-type ATPases consist of two structural domains, F(1) - containing the extramembraneous catalytic core, and F(0) - containing the membrane proton channel, linked together by a central stalk and a peripheral stalk. During catalysis, ATP synthesis in the catalytic domain of F(1) is coupled via a rotary mechanism of the central stalk subunits to proton translocation. Part of the complex F(0) domain and the peripheric stalk, which acts as a stator to hold the subunits of the catalytic subcomplexes relative to the rotary elements. Plays a role in germline development. The chain is ATP synthase F(0) complex subunit B1, mitochondrial from Caenorhabditis elegans.